A 276-amino-acid chain; its full sequence is Protein canopy homolog 3 (276 aa).

A signal peptide spans 1 to 26 (MESMSELAPRCLLFPLLLLLPLLLLP). The 223-residue stretch at 47–269 (SKCEVCKYVA…EGVQKASPLP (223 aa)) folds into the Saposin B-type domain. 3 disulfides stabilise this stretch: cysteine 49–cysteine 206, cysteine 52–cysteine 194, and cysteine 104–cysteine 166. Asparagine 153 carries N-linked (GlcNAc...) asparagine glycosylation. Residues 153–179 (NETSAEVADLKKQCDVLVEEFEEVIED) adopt a coiled-coil conformation. The interval 218–276 (IASLGGKKSKKKRSGVKGSSSGSSKQRKELGGLGEDANAEEEEGVQKASPLPHSPPDEL) is disordered.

This sequence belongs to the canopy family. Interacts with HSP90B1; this interaction is disrupted in the presence of ATP. Interacts with TLR1, TLR2, TLR4 and TLR9. Strongest interaction with TLR4.

Its subcellular location is the endoplasmic reticulum. Its function is as follows. Toll-like receptor (TLR)-specific co-chaperone for HSP90B1. Required for proper TLR folding, except that of TLR3, and hence controls TLR exit from the endoplasmic reticulum. Consequently, required for both innate and adaptive immune responses. The sequence is that of Protein canopy homolog 3 (Cnpy3) from Mus musculus (Mouse).